Reading from the N-terminus, the 175-residue chain is Alkyl hydroperoxide reductase AhpD (175 aa).

Cys130 functions as the Proton donor in the catalytic mechanism. A disulfide bridge links Cys130 with Cys133. Cys133 acts as the Cysteine sulfenic acid (-SOH) intermediate in catalysis.

This sequence belongs to the AhpD family. Homotrimer.

It carries out the reaction N(6)-[(R)-dihydrolipoyl]-L-lysyl-[lipoyl-carrier protein] + a hydroperoxide = N(6)-[(R)-lipoyl]-L-lysyl-[lipoyl-carrier protein] + an alcohol + H2O. Antioxidant protein with alkyl hydroperoxidase activity. Required for the reduction of the AhpC active site cysteine residues and for the regeneration of the AhpC enzyme activity. The protein is Alkyl hydroperoxide reductase AhpD of Mycobacteroides abscessus (strain ATCC 19977 / DSM 44196 / CCUG 20993 / CIP 104536 / JCM 13569 / NCTC 13031 / TMC 1543 / L948) (Mycobacterium abscessus).